Consider the following 401-residue polypeptide: (1R,4R,5S)-(-)-guaia-6,10(14)-diene synthase (401 aa).

Positions 1-21 (MVKFDSGSESEMTNGDDLHIN) are disordered. Mg(2+)-binding residues include Asp-134 and Glu-139. The short motif at 134 to 138 (DDQFD) is the DDXXD motif element. Arg-242 serves as a coordination point for substrate. Mg(2+) contacts are provided by Asn-288 and Ser-292. Residue Lys-295 coordinates substrate. Asp-296 serves as a coordination point for Mg(2+). 375 to 376 (RY) is a binding site for substrate.

The protein belongs to the terpene synthase family. Mg(2+) is required as a cofactor.

It carries out the reaction (2E,6E)-farnesyl diphosphate = (1R,4R,5S)-(-)-guaia-6,10(14)-diene + diphosphate. It functions in the pathway secondary metabolite biosynthesis; terpenoid biosynthesis. Its function is as follows. Catalyzes the conversion of (2E,6E)-farnesyl diphosphate (FPP) to yield the bicyclic sesquiterpene guaia-6,10(14)-diene via a 1,10-cyclization, which requires the abstraction of the pyrophosphate from FPP to yield the (E,E)-germacradienyl cation. The only accepted substrate is farnesyl diphosphate (FPP). This Fusarium proliferatum (strain ET1) (Orchid endophyte fungus) protein is (1R,4R,5S)-(-)-guaia-6,10(14)-diene synthase.